A 347-amino-acid polypeptide reads, in one-letter code: GMP reductase (347 aa).

108–131 (ADFVKMQQILALSPGLKFICIDVA) lines the NADP(+) pocket. Glycine 181 and glycine 183 together coordinate K(+). The active-site Thioimidate intermediate is the cysteine 186. 216 to 239 (IVSDGGCSVPGDVAKAFGGGADFV) lines the NADP(+) pocket.

Belongs to the IMPDH/GMPR family. GuaC type 1 subfamily. Homotetramer.

The catalysed reaction is IMP + NH4(+) + NADP(+) = GMP + NADPH + 2 H(+). Catalyzes the irreversible NADPH-dependent deamination of GMP to IMP. It functions in the conversion of nucleobase, nucleoside and nucleotide derivatives of G to A nucleotides, and in maintaining the intracellular balance of A and G nucleotides. In Serratia proteamaculans (strain 568), this protein is GMP reductase.